Reading from the N-terminus, the 100-residue chain is uncharacterized protein (100 aa).

This is an uncharacterized protein from Schizosaccharomyces pombe (strain 972 / ATCC 24843) (Fission yeast).